The following is a 1023-amino-acid chain: 2-oxoglutarate dehydrogenase complex component E1 (1023 aa).

The transit peptide at 1–40 (MFHLRTCAAKLRPLTASQTVKTFSQNRPAAARTFQQIRCY) directs the protein to the mitochondrion. The residue at position 74 (Lys74) is an N6-succinyllysine. The residue at position 100 (Ser100) is a Phosphoserine. His143, Asp156, and Asp158 together coordinate Ca(2+). Residue Arg312 coordinates thiamine diphosphate. An N6-acetyllysine modification is found at Lys401. Residues Asp411, Asn444, and Ile446 each coordinate thiamine diphosphate. Positions 411, 444, and 446 each coordinate Mg(2+). Residue Lys534 forms a Glycyl lysine isopeptide (Lys-Gly) (interchain with G-Cter in ubiquitin) linkage. Lys564 carries the post-translational modification N6-succinyllysine. Gln676 provides a ligand contact to thiamine diphosphate. The residue at position 970 (Lys970) is an N6-acetyllysine.

The protein belongs to the alpha-ketoglutarate dehydrogenase family. Homodimer. The 2-oxoglutarate dehydrogenase complex is composed of OGDH (2-oxoglutarate dehydrogenase; E1), DLST (dihydrolipoamide succinyltransferase; E2), DLD (dihydrolipoamide dehydrogenase; E3) and the assembly factor KGD4. It contains multiple copies of the three enzymatic components (E1, E2 and E3). In the nucleus, the 2-oxoglutarate dehydrogenase complex associates with KAT2A. Interacts with ABHD11; this interaction maintains the functional lipoylation of the 2-oxoglutarate dehydrogenase complex. It depends on thiamine diphosphate as a cofactor. The cofactor is Mg(2+).

The protein localises to the mitochondrion. Its subcellular location is the nucleus. It catalyses the reaction N(6)-[(R)-lipoyl]-L-lysyl-[protein] + 2-oxoglutarate + H(+) = N(6)-[(R)-S(8)-succinyldihydrolipoyl]-L-lysyl-[protein] + CO2. Calcium ions and ADP stimulate, whereas ATP and NADH reduce catalytic activity. Functionally, 2-oxoglutarate dehydrogenase (E1o) component of the 2-oxoglutarate dehydrogenase complex (OGDHC). Participates in the first step, rate limiting for the overall conversion of 2-oxoglutarate to succinyl-CoA and CO(2) catalyzed by the whole OGDHC. Catalyzes the irreversible decarboxylation of 2-oxoglutarate (alpha-ketoglutarate) via the thiamine diphosphate (ThDP) cofactor and subsequent transfer of the decarboxylated acyl intermediate on an oxidized dihydrolipoyl group that is covalently amidated to the E2 enzyme (dihydrolipoyllysine-residue succinyltransferase or DLST). Plays a key role in the Krebs (citric acid) cycle, which is a common pathway for oxidation of fuel molecules, including carbohydrates, fatty acids, and amino acids. Can catalyze the decarboxylation of 2-oxoadipate in vitro, but at a much lower rate than 2-oxoglutarate. Mainly active in the mitochondrion. A fraction of the 2-oxoglutarate dehydrogenase complex also localizes in the nucleus and is required for lysine succinylation of histones: associates with KAT2A on chromatin and provides succinyl-CoA to histone succinyltransferase KAT2A. The sequence is that of 2-oxoglutarate dehydrogenase complex component E1 from Macaca fascicularis (Crab-eating macaque).